Here is a 215-residue protein sequence, read N- to C-terminus: 3,4-dihydroxy-2-butanone 4-phosphate synthase (215 aa).

D-ribulose 5-phosphate-binding positions include 38–39, aspartate 43, 151–155, and glutamate 175; these read RE and RRGHT. Residue glutamate 39 coordinates Mg(2+). Position 154 (histidine 154) interacts with Mg(2+).

The protein belongs to the DHBP synthase family. As to quaternary structure, homodimer. Mg(2+) is required as a cofactor. Requires Mn(2+) as cofactor.

It carries out the reaction D-ribulose 5-phosphate = (2S)-2-hydroxy-3-oxobutyl phosphate + formate + H(+). Its pathway is cofactor biosynthesis; riboflavin biosynthesis; 2-hydroxy-3-oxobutyl phosphate from D-ribulose 5-phosphate: step 1/1. Functionally, catalyzes the conversion of D-ribulose 5-phosphate to formate and 3,4-dihydroxy-2-butanone 4-phosphate. The protein is 3,4-dihydroxy-2-butanone 4-phosphate synthase of Haemophilus influenzae (strain PittGG).